The sequence spans 298 residues: Keratin-associated protein 10-11 (298 aa).

25 tandem repeats follow at residues 26 to 30 (CCEPP), 36 to 40 (CCAPA), 57 to 61 (CCQAA), 79 to 83 (CCQQS), 89 to 93 (CCTSS), 99 to 103 (CCVPV), 104 to 108 (CCKTV), 109 to 113 (CCKPV), 114 to 118 (CCVPV), 119 to 123 (CCGAA), 126 to 130 (CCRQS), 136 to 140 (CCASS), 146 to 150 (CCVPV), 151 to 155 (CCKPV), 156 to 160 (CCVST), 168 to 172 (CCQQS), 178 to 182 (CCTSS), 188 to 192 (CCVPV), 193 to 197 (CCKTV), 203 to 207 (CCVPV), 225 to 229 (CCTTS), 230 to 234 (CCRPS), 249 to 253 (CCVPV), 256 to 260 (CCAPT), and 267 to 271 (CCRPA). Residues 26–271 (CCEPPCSAPS…SCQSSCCRPA (246 aa)) form a 25 X 5 AA repeats of C-C-X(3) region.

This sequence belongs to the KRTAP type 10 family. As to quaternary structure, interacts with hair keratins. In terms of tissue distribution, restricted to a narrow region of the hair fiber cuticle, lying approximately 20 cell layers above the apex of the dermal papilla of the hair root; not detected in any other tissues.

In terms of biological role, in the hair cortex, hair keratin intermediate filaments are embedded in an interfilamentous matrix, consisting of hair keratin-associated proteins (KRTAP), which are essential for the formation of a rigid and resistant hair shaft through their extensive disulfide bond cross-linking with abundant cysteine residues of hair keratins. The matrix proteins include the high-sulfur and high-glycine-tyrosine keratins. In Homo sapiens (Human), this protein is Keratin-associated protein 10-11 (KRTAP10-11).